The primary structure comprises 141 residues: Hemoglobin subunit alpha (141 aa).

Residues 1-141 (VLSAADKSNV…VSTVLTSKYR (141 aa)) enclose the Globin domain. Ser3 carries the phosphoserine modification. An N6-succinyllysine mark is found at Lys7 and Lys11. At Lys16 the chain carries N6-acetyllysine; alternate. Residue Lys16 is modified to N6-succinyllysine; alternate. Tyr24 carries the phosphotyrosine modification. Ser35 carries the phosphoserine modification. Lys40 carries the post-translational modification N6-succinyllysine. Residue Ser49 is modified to Phosphoserine. O2 is bound at residue His58. His87 provides a ligand contact to heme b. Residue Ser102 is modified to Phosphoserine. Phosphothreonine is present on Thr108. A Phosphoserine modification is found at Ser124. Phosphothreonine occurs at positions 134 and 137. A Phosphoserine modification is found at Ser138.

This sequence belongs to the globin family. As to quaternary structure, heterotetramer of two alpha chains and two beta chains. In terms of tissue distribution, red blood cells.

In terms of biological role, involved in oxygen transport from the lung to the various peripheral tissues. Its function is as follows. Hemopressin acts as an antagonist peptide of the cannabinoid receptor CNR1. Hemopressin-binding efficiently blocks cannabinoid receptor CNR1 and subsequent signaling. This Felis catus (Cat) protein is Hemoglobin subunit alpha (HBA).